A 72-amino-acid chain; its full sequence is MSKSDIIEMQGTVLEALPNAMFEVELESGHKILAHISGKLRMNFIRILPGDKVTVELSPYDLTRGRITWRAK.

One can recognise an S1-like domain in the interval 1 to 72 (MSKSDIIEMQ…TRGRITWRAK (72 aa)).

It belongs to the IF-1 family. In terms of assembly, component of the 30S ribosomal translation pre-initiation complex which assembles on the 30S ribosome in the order IF-2 and IF-3, IF-1 and N-formylmethionyl-tRNA(fMet); mRNA recruitment can occur at any time during PIC assembly.

The protein resides in the cytoplasm. One of the essential components for the initiation of protein synthesis. Stabilizes the binding of IF-2 and IF-3 on the 30S subunit to which N-formylmethionyl-tRNA(fMet) subsequently binds. Helps modulate mRNA selection, yielding the 30S pre-initiation complex (PIC). Upon addition of the 50S ribosomal subunit IF-1, IF-2 and IF-3 are released leaving the mature 70S translation initiation complex. The sequence is that of Translation initiation factor IF-1 from Clostridium perfringens (strain 13 / Type A).